A 178-amino-acid polypeptide reads, in one-letter code: CRISPR system ring nuclease SSO2081 (178 aa).

Positions 105–106 are transition state stabilizer; it reads RK.

Belongs to the cOA ring nuclease family. In terms of assembly, homodimer. Does not require a metal cofactor. is required as a cofactor.

It is found in the cytoplasm. The enzyme catalyses cyclic tetraadenylate = 2 5'-hydroxy-diadenylate 2',3'-cylic phosphate. CRISPR (clustered regularly interspaced short palindromic repeat) is an adaptive immune system that provides protection against mobile genetic elements (viruses, transposable elements and conjugative plasmids). CRISPR clusters contain spacers, sequences complementary to antecedent mobile elements, and target invading nucleic acids. CRISPR clusters are transcribed and processed into CRISPR RNA (crRNA). A nuclease that degrades cyclic oligoadenylates (cOA), second messengers that induce an antiviral state important for defense against invading nucleic acids. Destruction of cOA deactivates the Csx1 ribonuclease, preventing uncontrolled degradation of cellular RNA. Degrades cA4 (a tetraadenylate ring) into a linear diadenylate product with 5'-OH and 2',3'-cyclic phosphate termini. Is 10-fold more active than SSO1393, suggesting this is the major cA4 degradation enzyme. Is highly specific for cA4; it has very poor activity on cA6 and no discernible activity against a number of cyclic dinucleotides. There may be 2 active sites per homodimer. The chain is CRISPR system ring nuclease SSO2081 from Saccharolobus solfataricus (strain ATCC 35092 / DSM 1617 / JCM 11322 / P2) (Sulfolobus solfataricus).